Reading from the N-terminus, the 294-residue chain is ATP synthase gamma chain (294 aa).

It belongs to the ATPase gamma chain family. F-type ATPases have 2 components, CF(1) - the catalytic core - and CF(0) - the membrane proton channel. CF(1) has five subunits: alpha(3), beta(3), gamma(1), delta(1), epsilon(1). CF(0) has three main subunits: a, b and c.

It is found in the cell inner membrane. Its function is as follows. Produces ATP from ADP in the presence of a proton gradient across the membrane. The gamma chain is believed to be important in regulating ATPase activity and the flow of protons through the CF(0) complex. The protein is ATP synthase gamma chain of Rhizobium leguminosarum bv. trifolii (strain WSM2304).